The following is a 366-amino-acid chain: Anhydro-N-acetylmuramic acid kinase (366 aa).

10–17 provides a ligand contact to ATP; it reads GTSMDGID.

The protein belongs to the anhydro-N-acetylmuramic acid kinase family.

The enzyme catalyses 1,6-anhydro-N-acetyl-beta-muramate + ATP + H2O = N-acetyl-D-muramate 6-phosphate + ADP + H(+). It functions in the pathway amino-sugar metabolism; 1,6-anhydro-N-acetylmuramate degradation. The protein operates within cell wall biogenesis; peptidoglycan recycling. Catalyzes the specific phosphorylation of 1,6-anhydro-N-acetylmuramic acid (anhMurNAc) with the simultaneous cleavage of the 1,6-anhydro ring, generating MurNAc-6-P. Is required for the utilization of anhMurNAc either imported from the medium or derived from its own cell wall murein, and thus plays a role in cell wall recycling. This chain is Anhydro-N-acetylmuramic acid kinase, found in Legionella pneumophila subsp. pneumophila (strain Philadelphia 1 / ATCC 33152 / DSM 7513).